The chain runs to 270 residues: tRNA pseudouridine synthase A (270 aa).

Residue Asp60 is the Nucleophile of the active site. The segment at 107 to 111 is RNA binding; it reads FHARF. Tyr118 is a binding site for substrate. An interaction with tRNA region spans residues 168–172; sequence QCQSR.

Belongs to the tRNA pseudouridine synthase TruA family. In terms of assembly, homodimer.

It carries out the reaction uridine(38/39/40) in tRNA = pseudouridine(38/39/40) in tRNA. Formation of pseudouridine at positions 38, 39 and 40 in the anticodon stem and loop of transfer RNAs. The protein is tRNA pseudouridine synthase A of Klebsiella pneumoniae (strain 342).